A 68-amino-acid polypeptide reads, in one-letter code: Beta-defensin 1 (68 aa).

A signal peptide spans 1-21 (MRTSYLLLFTLCLLLSEMASG). Residues 22-32 (DNFLTGLGHRS) constitute a propeptide that is removed on maturation. Disulfide bonds link cysteine 37/cysteine 66, cysteine 44/cysteine 59, and cysteine 49/cysteine 67.

Belongs to the beta-defensin family. As to quaternary structure, monomer. Homodimer.

The protein localises to the secreted. The protein resides in the membrane. In terms of biological role, has bactericidal activity. May act as a ligand for C-C chemokine receptor CCR6. Positively regulates the sperm motility and bactericidal activity in a CCR6-dependent manner. Binds to CCR6 and triggers Ca2+ mobilization in the sperm which is important for its motility. This Macaca mulatta (Rhesus macaque) protein is Beta-defensin 1 (DEFB1).